The chain runs to 166 residues: V-type proton ATPase subunit c4 (166 aa).

Residues 1–13 are Lumenal-facing; that stretch reads MASSGFSGDETAP. Residues 14 to 34 form a helical membrane-spanning segment; sequence FFGFLGAAAALVFSCMGAAYG. Topologically, residues 35–56 are cytoplasmic; sequence TAKSGVGVASMGVMRPELVMKS. A helical transmembrane segment spans residues 57–77; it reads IVPVVMAGVLGIYGLIIAVII. Residues 78-96 lie on the Lumenal side of the membrane; sequence STGINPKAKSYYLFDGYAH. A helical membrane pass occupies residues 97–118; sequence LSSGLACGLAGLSAGMAIGIVG. The Cytoplasmic segment spans residues 119-130; the sequence is DAGVRANAQQPK. Residues 131 to 156 form a helical membrane-spanning segment; the sequence is LFVGMILILIFAEALALYGLIVGIIL. Over 157–166 the chain is Lumenal; it reads SSRAGQSRAE.

This sequence belongs to the V-ATPase proteolipid subunit family. V-ATPase is a heteromultimeric enzyme composed of a peripheral catalytic V1 complex (components A to H) attached to an integral membrane V0 proton pore complex (components: a, c, c'', d and e). The proteolipid components c and c'' are present as a hexameric ring that forms the proton-conducting pore. Interacts with APD2.

It localises to the vacuole membrane. Its function is as follows. Proton-conducting pore forming subunit of the membrane integral V0 complex of vacuolar ATPase. V-ATPase is responsible for acidifying a variety of intracellular compartments in eukaryotic cells. This is V-type proton ATPase subunit c4 (VHA-c4) from Arabidopsis thaliana (Mouse-ear cress).